The sequence spans 453 residues: Putative folate transporter 2 (453 aa).

11 helical membrane passes run 41-64 (IVVYLVGLSDGLIHLASLAIYYLF), 76-96 (SLILMYPYLPFILKPIIALIT), 108-126 (PYLFLFSLFQSLNFLSLAL), 132-156 (IQATLVLFFISLCASFCTTVAEALV), 176-195 (IASKAVGSLSVAYFSGYFLE), 201-220 (YIFMATSIFPLIISISCLFL), 241-260 (FINTPVFIGPFLYIFVYMSG), 280-300 (SFMGTLRLTYGIASLIGIIVY), 312-330 (TLIFTTLVSFPIYISPIIL), 346-366 (VLSGGFLIEAITEIQLLPLFI), and 416-437 (LSMYILTCGLFLLLSLSLVPLL).

Belongs to the major facilitator superfamily. Folate-biopterin transporter (TC 2.A.71) family.

The protein localises to the plastid. Its subcellular location is the apicoplast. It is found in the membrane. Functionally, putative folate transporter. Required for sporogony of malaria parasites and host switching. The protein is Putative folate transporter 2 of Plasmodium berghei (strain Anka).